The primary structure comprises 695 residues: Pre-mRNA-splicing factor CLF1 (695 aa).

HAT repeat units lie at residues 41 to 73 (DVQR…FEIE), 75 to 107 (HDMR…SELK), 109 to 141 (GYIN…VEES), 143 to 174 (AHFD…FEVR), 176 to 207 (ERYE…FEVR), 296 to 328 (TIIL…LLEN), 333 to 365 (LVME…IWIK), 375 to 412 (NDIP…FEIR), 414 to 445 (DNLE…LETK), 447 to 479 (REFD…FEDS), 521 to 553 (QNFD…KKLT), and 591 to 629 (NNKD…FEGQ).

The protein belongs to the crooked-neck family. Associated with the spliceosome.

Its subcellular location is the nucleus. Its function is as follows. Involved in pre-mRNA splicing and cell cycle progression. Required for the spliceosome assembly and initiation of the DNA replication. This is Pre-mRNA-splicing factor CLF1 (CLF1) from Candida glabrata (strain ATCC 2001 / BCRC 20586 / JCM 3761 / NBRC 0622 / NRRL Y-65 / CBS 138) (Yeast).